Reading from the N-terminus, the 329-residue chain is 31 kDa immunogenic protein (329 aa).

An N-terminal signal peptide occupies residues 1–28 (MKFGSKIRRLAVAAVAGAIALGASFAVA).

This is 31 kDa immunogenic protein (bcsP31) from Brucella abortus biovar 1 (strain 9-941).